A 198-amino-acid polypeptide reads, in one-letter code: MSEIFIYPQATCIAGVDEVGRGPLVGAVVTAAVILDPTRPIVGLADSKQLSEKRRLALYDEIKEKALAWSLGRAEPEEIDQLNILHATMLAMQRAVAGLAVVPDFVLIDGNRCPALPMPSQAVVKGDSRVAEISAASIMAKVTRDREMVELDERFPAYGFAQHKGYPTAFHLEKLAALGATEFHRRSFAPVKRALGLA.

Residues 11 to 198 enclose the RNase H type-2 domain; that stretch reads TCIAGVDEVG…APVKRALGLA (188 aa). Residues aspartate 17, glutamate 18, and aspartate 109 each coordinate a divalent metal cation.

The protein belongs to the RNase HII family. Mn(2+) serves as cofactor. It depends on Mg(2+) as a cofactor.

It is found in the cytoplasm. The catalysed reaction is Endonucleolytic cleavage to 5'-phosphomonoester.. In terms of biological role, endonuclease that specifically degrades the RNA of RNA-DNA hybrids. This Pectobacterium carotovorum subsp. carotovorum (strain PC1) protein is Ribonuclease HII.